Consider the following 644-residue polypeptide: Phosphomethylpyrimidine synthase (644 aa).

Substrate is bound by residues N236, M265, Y294, H330, 350-352 (SRG), 391-394 (DGLR), and E430. A Zn(2+)-binding site is contributed by H434. Y457 contacts substrate. H498 serves as a coordination point for Zn(2+). 3 residues coordinate [4Fe-4S] cluster: C578, C581, and C586.

This sequence belongs to the ThiC family. As to quaternary structure, homodimer. Requires [4Fe-4S] cluster as cofactor.

The catalysed reaction is 5-amino-1-(5-phospho-beta-D-ribosyl)imidazole + S-adenosyl-L-methionine = 4-amino-2-methyl-5-(phosphooxymethyl)pyrimidine + CO + 5'-deoxyadenosine + formate + L-methionine + 3 H(+). It participates in cofactor biosynthesis; thiamine diphosphate biosynthesis. Its function is as follows. Catalyzes the synthesis of the hydroxymethylpyrimidine phosphate (HMP-P) moiety of thiamine from aminoimidazole ribotide (AIR) in a radical S-adenosyl-L-methionine (SAM)-dependent reaction. The sequence is that of Phosphomethylpyrimidine synthase from Aliivibrio fischeri (strain ATCC 700601 / ES114) (Vibrio fischeri).